We begin with the raw amino-acid sequence, 445 residues long: NAD-specific glutamate dehydrogenase (445 aa).

Residue K124 is part of the active site.

Belongs to the Glu/Leu/Phe/Val dehydrogenases family. Homohexamer.

Its subcellular location is the cell surface. The catalysed reaction is L-glutamate + NAD(+) + H2O = 2-oxoglutarate + NH4(+) + NADH + H(+). Its function is as follows. Probably involved in degradation rather than biosynthesis of glutamate. The polypeptide is NAD-specific glutamate dehydrogenase (gdh) (Porphyromonas gingivalis (strain ATCC 33277 / DSM 20709 / CIP 103683 / JCM 12257 / NCTC 11834 / 2561)).